The primary structure comprises 393 residues: Chorismate synthase (393 aa).

Arg-40 and Arg-46 together coordinate NADP(+). FMN-binding positions include 129–131, 251–252, Gly-301, 316–320, and Arg-342; these read RAS, QA, and KPIST.

Belongs to the chorismate synthase family. In terms of assembly, homotetramer. Requires FMNH2 as cofactor.

It catalyses the reaction 5-O-(1-carboxyvinyl)-3-phosphoshikimate = chorismate + phosphate. It functions in the pathway metabolic intermediate biosynthesis; chorismate biosynthesis; chorismate from D-erythrose 4-phosphate and phosphoenolpyruvate: step 7/7. Functionally, catalyzes the anti-1,4-elimination of the C-3 phosphate and the C-6 proR hydrogen from 5-enolpyruvylshikimate-3-phosphate (EPSP) to yield chorismate, which is the branch point compound that serves as the starting substrate for the three terminal pathways of aromatic amino acid biosynthesis. This reaction introduces a second double bond into the aromatic ring system. This Koribacter versatilis (strain Ellin345) protein is Chorismate synthase.